A 122-amino-acid polypeptide reads, in one-letter code: Basic phospholipase A2 (122 aa).

7 disulfide bridges follow: C26-C115, C28-C44, C43-C95, C49-C122, C50-C88, C57-C81, and C75-C86. Residues Y27, G29, and G31 each contribute to the Ca(2+) site. The active site involves H47. D48 lines the Ca(2+) pocket. The active site involves D89.

The protein belongs to the phospholipase A2 family. Group II subfamily. D49 sub-subfamily. It depends on Ca(2+) as a cofactor. In terms of tissue distribution, expressed by the venom gland.

It localises to the secreted. The enzyme catalyses a 1,2-diacyl-sn-glycero-3-phosphocholine + H2O = a 1-acyl-sn-glycero-3-phosphocholine + a fatty acid + H(+). Its function is as follows. Snake venom phospholipase A2 (PLA2) that does not inhibit platelet aggregation. Exhibits cytotoxic and anticoagulant activity. Induces Ehrlich tumor growth but not angiogenesis. PLA2 catalyzes the calcium-dependent hydrolysis of the 2-acyl groups in 3-sn-phosphoglycerides. In Bothrops leucurus (Whitetail lancehead), this protein is Basic phospholipase A2.